A 203-amino-acid polypeptide reads, in one-letter code: Thymidylate kinase (203 aa).

Residue G10–T17 participates in ATP binding.

It belongs to the thymidylate kinase family.

The catalysed reaction is dTMP + ATP = dTDP + ADP. In terms of biological role, phosphorylation of dTMP to form dTDP in both de novo and salvage pathways of dTTP synthesis. In Carboxydothermus hydrogenoformans (strain ATCC BAA-161 / DSM 6008 / Z-2901), this protein is Thymidylate kinase.